Reading from the N-terminus, the 205-residue chain is Coatomer subunit zeta-2 (205 aa).

Over residues 1–12 the composition is skewed to basic and acidic residues; sequence MQRPEAWPRPHP. Residues 1 to 33 form a disordered region; it reads MQRPEAWPRPHPGEGASAAQAGGAAPPTRATEQ. Low complexity predominate over residues 13–30; the sequence is GEGASAAQAGGAAPPTRA.

This sequence belongs to the adaptor complexes small subunit family. In terms of assembly, oligomeric complex.

Its subcellular location is the cytoplasm. It is found in the cytosol. The protein resides in the endoplasmic reticulum-Golgi intermediate compartment membrane. It localises to the golgi apparatus membrane. The protein localises to the cytoplasmic vesicle. Its subcellular location is the COPI-coated vesicle membrane. In terms of biological role, the coatomer is a cytosolic protein complex that binds to dilysine motifs and reversibly associates with Golgi non-clathrin-coated vesicles, which further mediate biosynthetic protein transport from the ER, via the Golgi up to the trans Golgi network. Coatomer complex is required for budding from Golgi membranes, and is essential for the retrograde Golgi-to-ER transport of dilysine-tagged proteins. The zeta subunit may be involved in regulating the coat assembly and, hence, the rate of biosynthetic protein transport due to its association-dissociation properties with the coatomer complex. The sequence is that of Coatomer subunit zeta-2 (Copz2) from Mus musculus (Mouse).